We begin with the raw amino-acid sequence, 607 residues long: Elongation factor 4 (607 aa).

The region spanning 6 to 188 (DRIRNFSIIA…AIVARIPAPK (183 aa)) is the tr-type G domain. GTP contacts are provided by residues 18 to 23 (DHGKST) and 135 to 138 (NKID).

This sequence belongs to the TRAFAC class translation factor GTPase superfamily. Classic translation factor GTPase family. LepA subfamily.

It localises to the cell inner membrane. The catalysed reaction is GTP + H2O = GDP + phosphate + H(+). Required for accurate and efficient protein synthesis under certain stress conditions. May act as a fidelity factor of the translation reaction, by catalyzing a one-codon backward translocation of tRNAs on improperly translocated ribosomes. Back-translocation proceeds from a post-translocation (POST) complex to a pre-translocation (PRE) complex, thus giving elongation factor G a second chance to translocate the tRNAs correctly. Binds to ribosomes in a GTP-dependent manner. This is Elongation factor 4 from Rhizorhabdus wittichii (strain DSM 6014 / CCUG 31198 / JCM 15750 / NBRC 105917 / EY 4224 / RW1) (Sphingomonas wittichii).